Consider the following 503-residue polypeptide: Probable cytosol aminopeptidase (503 aa).

The Mn(2+) site is built by Lys-270 and Asp-275. The active site involves Lys-282. Residues Asp-293, Asp-352, and Glu-354 each coordinate Mn(2+). Residue Arg-356 is part of the active site.

Belongs to the peptidase M17 family. It depends on Mn(2+) as a cofactor.

It is found in the cytoplasm. The enzyme catalyses Release of an N-terminal amino acid, Xaa-|-Yaa-, in which Xaa is preferably Leu, but may be other amino acids including Pro although not Arg or Lys, and Yaa may be Pro. Amino acid amides and methyl esters are also readily hydrolyzed, but rates on arylamides are exceedingly low.. It catalyses the reaction Release of an N-terminal amino acid, preferentially leucine, but not glutamic or aspartic acids.. Presumably involved in the processing and regular turnover of intracellular proteins. Catalyzes the removal of unsubstituted N-terminal amino acids from various peptides. This Salmonella arizonae (strain ATCC BAA-731 / CDC346-86 / RSK2980) protein is Probable cytosol aminopeptidase.